The following is a 160-amino-acid chain: Cytochrome b6-f complex subunit 4 (160 aa).

The next 3 membrane-spanning stretches (helical) occupy residues 36-56 (LLYMFPVVILGTIACNVGLAV), 95-115 (LLGVLLMAAVPAGLLTVPFIE), and 131-151 (TVFLIGTVVAIWLGIGATLPI).

Belongs to the cytochrome b family. PetD subfamily. As to quaternary structure, the 4 large subunits of the cytochrome b6-f complex are cytochrome b6, subunit IV (17 kDa polypeptide, petD), cytochrome f and the Rieske protein, while the 4 small subunits are petG, petL, petM and petN. The complex functions as a dimer.

Its subcellular location is the plastid. It localises to the chloroplast thylakoid membrane. Its function is as follows. Component of the cytochrome b6-f complex, which mediates electron transfer between photosystem II (PSII) and photosystem I (PSI), cyclic electron flow around PSI, and state transitions. In Coleochaete orbicularis (Charophycean green alga), this protein is Cytochrome b6-f complex subunit 4.